Consider the following 1007-residue polypeptide: Probable beta-galactosidase A (1007 aa).

The N-terminal stretch at 1–18 is a signal peptide; that stretch reads MRLLPVWTAALLAAQAAG. Residues Tyr96, Asn140, Ala141, and Glu142 each coordinate substrate. Residue Asn156 is glycosylated (N-linked (GlcNAc...) asparagine). Asn199 contributes to the substrate binding site. Glu200 functions as the Proton donor in the catalytic mechanism. Cys205 and Cys206 form a disulfide bridge. Substrate is bound at residue Tyr260. Cys266 and Cys315 form a disulfide bridge. The active-site Nucleophile is the Glu298. Tyr364 is a binding site for substrate. N-linked (GlcNAc...) asparagine glycosylation is found at Asn405, Asn422, Asn621, Asn740, Asn775, and Asn914.

It belongs to the glycosyl hydrolase 35 family.

Its subcellular location is the secreted. It catalyses the reaction Hydrolysis of terminal non-reducing beta-D-galactose residues in beta-D-galactosides.. Functionally, cleaves beta-linked terminal galactosyl residues from gangliosides, glycoproteins, and glycosaminoglycans. The protein is Probable beta-galactosidase A (lacA) of Emericella nidulans (strain FGSC A4 / ATCC 38163 / CBS 112.46 / NRRL 194 / M139) (Aspergillus nidulans).